We begin with the raw amino-acid sequence, 251 residues long: 3-deoxy-manno-octulosonate cytidylyltransferase (251 aa).

The protein belongs to the KdsB family.

Its subcellular location is the cytoplasm. It carries out the reaction 3-deoxy-alpha-D-manno-oct-2-ulosonate + CTP = CMP-3-deoxy-beta-D-manno-octulosonate + diphosphate. It functions in the pathway nucleotide-sugar biosynthesis; CMP-3-deoxy-D-manno-octulosonate biosynthesis; CMP-3-deoxy-D-manno-octulosonate from 3-deoxy-D-manno-octulosonate and CTP: step 1/1. The protein operates within bacterial outer membrane biogenesis; lipopolysaccharide biosynthesis. Activates KDO (a required 8-carbon sugar) for incorporation into bacterial lipopolysaccharide in Gram-negative bacteria. In Rhizobium etli (strain ATCC 51251 / DSM 11541 / JCM 21823 / NBRC 15573 / CFN 42), this protein is 3-deoxy-manno-octulosonate cytidylyltransferase.